Consider the following 571-residue polypeptide: Proline--tRNA ligase (571 aa).

Belongs to the class-II aminoacyl-tRNA synthetase family. ProS type 1 subfamily. As to quaternary structure, homodimer.

The protein localises to the cytoplasm. The enzyme catalyses tRNA(Pro) + L-proline + ATP = L-prolyl-tRNA(Pro) + AMP + diphosphate. In terms of biological role, catalyzes the attachment of proline to tRNA(Pro) in a two-step reaction: proline is first activated by ATP to form Pro-AMP and then transferred to the acceptor end of tRNA(Pro). As ProRS can inadvertently accommodate and process non-cognate amino acids such as alanine and cysteine, to avoid such errors it has two additional distinct editing activities against alanine. One activity is designated as 'pretransfer' editing and involves the tRNA(Pro)-independent hydrolysis of activated Ala-AMP. The other activity is designated 'posttransfer' editing and involves deacylation of mischarged Ala-tRNA(Pro). The misacylated Cys-tRNA(Pro) is not edited by ProRS. The sequence is that of Proline--tRNA ligase from Shewanella baltica (strain OS155 / ATCC BAA-1091).